The chain runs to 384 residues: Protein NDRG1 (384 aa).

Position 2 is an N-acetylserine (Ser-2). Phosphoserine is present on residues Ser-2, Ser-319, and Ser-326. Residues 325 to 384 (RSRTASGSSVTSLEGARSRSHTSEGTRSRSHTSEGTRLDIIPNSGGPGSSAGPNSTEVSC) are disordered. Positions 327–336 (RTASGSSVTS) are enriched in polar residues. The residue at position 328 (Thr-328) is a Phosphothreonine; by SGK1. Phosphoserine; by SGK1 occurs at positions 330 and 332. A Phosphoserine modification is found at Ser-333. Thr-335 is subject to Phosphothreonine. Residues Ser-336 and Ser-342 each carry the phosphoserine modification. Tandem repeats lie at residues 339 to 348 (GARSRSHTSE) and 349 to 358 (GTRSRSHTSE). The tract at residues 339-358 (GARSRSHTSEGTRSRSHTSE) is 2 X 10 AA tandem repeats of G-[PST]-R-S-R-S-H-T-S-E. Residues 345-361 (HTSEGTRSRSHTSEGTR) show a composition bias toward basic and acidic residues. Thr-346 is subject to Phosphothreonine; by SGK1. Ser-352 carries the phosphoserine modification. Residue Thr-356 is modified to Phosphothreonine; by SGK1. A compositionally biased stretch (low complexity) spans 374-384 (SAGPNSTEVSC).

Belongs to the NDRG family. In terms of assembly, interacts with RAB4A (membrane-bound form); the interaction involves NDRG1 in vesicular recycling of CDH1. Interacts with APOA1, APOA2, PRA1 and RTN1. In terms of processing, under stress conditions, phosphorylated in the C-terminal on many serine and threonine residues. Phosphorylated in vitro by PKA. Phosphorylation enhanced by increased intracellular cAMP levels. Homocysteine induces dephosphorylation. Phosphorylation by SGK1 is cell cycle dependent.

The protein resides in the cytoplasm. Its subcellular location is the cytosol. It is found in the cytoskeleton. It localises to the microtubule organizing center. The protein localises to the centrosome. The protein resides in the nucleus. Its subcellular location is the cell membrane. Functionally, stress-responsive protein involved in hormone responses, cell growth, and differentiation. Acts as a tumor suppressor in many cell types. Necessary but not sufficient for p53/TP53-mediated caspase activation and apoptosis. Has a role in cell trafficking notably of the Schwann cell and is necessary for the maintenance and development of the peripheral nerve myelin sheath. Required for vesicular recycling of CDH1 and TF. May also function in lipid trafficking. Protects cells from spindle disruption damage. Functions in p53/TP53-dependent mitotic spindle checkpoint. Regulates microtubule dynamics and maintains euploidy. This is Protein NDRG1 (NDRG1) from Bos taurus (Bovine).